A 1052-amino-acid chain; its full sequence is Ubiquitin-like modifier-activating enzyme 6 (1052 aa).

M1 carries the N-acetylmethionine modification. A disordered region spans residues 1–21 (MEGSEPVAAHQGEEASCSSWG). Position 46 (R46) interacts with ATP. Phosphothreonine is present on T54. Position 301 is a phosphoserine (S301). Positions 470 and 497 each coordinate ATP. The Mg(2+) site is built by D499 and E502. 4 residues coordinate ATP: N505, R508, Q509, and K521. K544 is modified (N6-acetyllysine). V545 is an ATP binding site. D569 is a binding site for Mg(2+). N570 provides a ligand contact to ATP. The active-site Glycyl thioester intermediate is C625. K729 is subject to N6-acetyllysine. The residue at position 737 (S737) is a Phosphoserine.

The protein belongs to the ubiquitin-activating E1 family. As to quaternary structure, forms a thioester with UBD in cells stimulated with tumor necrosis factor-alpha (TNFa) and interferon-gamma (IFNg). Widely expressed. Isoform 2 is predominantly expressed in testis with higher expression in adult testis than in fetal testis.

The enzyme catalyses ATP + ubiquitin + [E1 ubiquitin-activating enzyme]-L-cysteine = AMP + diphosphate + S-ubiquitinyl-[E1 ubiquitin-activating enzyme]-L-cysteine.. It participates in protein modification; protein ubiquitination. Activates ubiquitin by first adenylating its C-terminal glycine residue with ATP, and thereafter linking this residue to the side chain of a cysteine residue in E1, yielding a ubiquitin-E1 thioester and free AMP. Specific for ubiquitin, does not activate ubiquitin-like peptides. Also activates UBD/FAT10 conjugation via adenylation of its C-terminal glycine. Differs from UBE1 in its specificity for substrate E2 charging. Does not charge cell cycle E2s, such as CDC34. Essential for embryonic development. Isoform 2 may play a key role in ubiquitin system and may influence spermatogenesis and male fertility. The chain is Ubiquitin-like modifier-activating enzyme 6 (UBA6) from Homo sapiens (Human).